Reading from the N-terminus, the 435-residue chain is Methylenetetrahydrofolate--tRNA-(uracil-5-)-methyltransferase TrmFO (435 aa).

9-14 (GAGLAG) contacts FAD.

Belongs to the MnmG family. TrmFO subfamily. FAD serves as cofactor.

It is found in the cytoplasm. It carries out the reaction uridine(54) in tRNA + (6R)-5,10-methylene-5,6,7,8-tetrahydrofolate + NADH + H(+) = 5-methyluridine(54) in tRNA + (6S)-5,6,7,8-tetrahydrofolate + NAD(+). The catalysed reaction is uridine(54) in tRNA + (6R)-5,10-methylene-5,6,7,8-tetrahydrofolate + NADPH + H(+) = 5-methyluridine(54) in tRNA + (6S)-5,6,7,8-tetrahydrofolate + NADP(+). Functionally, catalyzes the folate-dependent formation of 5-methyl-uridine at position 54 (M-5-U54) in all tRNAs. The chain is Methylenetetrahydrofolate--tRNA-(uracil-5-)-methyltransferase TrmFO from Staphylococcus haemolyticus (strain JCSC1435).